A 204-amino-acid chain; its full sequence is Anthranilate synthase component 2 (204 aa).

The 192-residue stretch at 13 to 204 (RVLVVDNYDS…KNFLEDPWTR (192 aa)) folds into the Glutamine amidotransferase type-1 domain. 64 to 66 (GPC) is an L-glutamine binding site. Residue Cys91 is the Nucleophile; for GATase activity of the active site. Residues Gln95 and 141 to 142 (SL) contribute to the L-glutamine site. Residues His181 and Glu183 each act as for GATase activity in the active site.

Heterotetramer consisting of two non-identical subunits: a beta subunit (TrpG) and a large alpha subunit (TrpE).

It carries out the reaction chorismate + L-glutamine = anthranilate + pyruvate + L-glutamate + H(+). The protein operates within amino-acid biosynthesis; L-tryptophan biosynthesis; L-tryptophan from chorismate: step 1/5. Functionally, part of a heterotetrameric complex that catalyzes the two-step biosynthesis of anthranilate, an intermediate in the biosynthesis of L-tryptophan. In the first step, the glutamine-binding beta subunit (TrpG) of anthranilate synthase (AS) provides the glutamine amidotransferase activity which generates ammonia as a substrate that, along with chorismate, is used in the second step, catalyzed by the large alpha subunit of AS (TrpE) to produce anthranilate. In the absence of TrpG, TrpE can synthesize anthranilate directly from chorismate and high concentrations of ammonia. In Thermus thermophilus (strain ATCC 27634 / DSM 579 / HB8), this protein is Anthranilate synthase component 2 (trpG).